Consider the following 442-residue polypeptide: MDHVIGGKFKLGRKIGSGSFGELYIGINVQTGEEVALKLEPVKTKHPQLHYESKVYMLLQGGTGVPHIKWFGVEGNYNCMAIDLLGPSLEDLFNYCTRSFSLKTVLMLADQLINRVEYMHSRGFLHRDIKPDNFLMGLGRKANQVYIIDYGLAKKYRDLQTHKHIPYRENKNLTGTARYASVNTHLGIEQSRRDDLESLGYVLMYFIRGSLPWQGLKAGTKKQKYEKISEKKMLTPVEVLCKSYPSEFTSYFHYCRSLRFEDKPDYSYLKRLFRDLFIREGYQFDYVFDWTILKYPQSGSISKPRPNPKPALDPPGPSAERNEKPIVGQDLRERFSGAVEAFARRNVPSHGIRPKHIFSDDASKEVQVSEKTRNEIATKMAVMSSSQPGSSGELSENRSSKLFSSSAQKIQPVQETKLSARLGRDDGLRSFDMLTIGSGKRK.

In terms of domain architecture, Protein kinase spans 9–278 (FKLGRKIGSG…LKRLFRDLFI (270 aa)). ATP-binding positions include 15–23 (IGSGSFGEL) and Lys38. Asp128 acts as the Proton acceptor in catalysis. Disordered stretches follow at residues 299 to 323 (GSISKPRPNPKPALDPPGPSAERNE) and 381 to 421 (AVMS…LSAR). A compositionally biased stretch (pro residues) spans 305-317 (RPNPKPALDPPGP). Over residues 384-394 (SSSQPGSSGEL) the composition is skewed to low complexity. A compositionally biased stretch (polar residues) spans 400 to 417 (SKLFSSSAQKIQPVQETK).

The protein belongs to the protein kinase superfamily. CK1 Ser/Thr protein kinase family. Casein kinase I subfamily. In terms of assembly, monomer. Autophosphorylated.

The protein resides in the cytoplasm. The protein localises to the cell junction. It is found in the plasmodesma. The catalysed reaction is L-seryl-[protein] + ATP = O-phospho-L-seryl-[protein] + ADP + H(+). The enzyme catalyses L-threonyl-[protein] + ATP = O-phospho-L-threonyl-[protein] + ADP + H(+). Casein kinases are operationally defined by their preferential utilization of acidic proteins such as caseins as substrates. It can phosphorylate a large number of proteins. The sequence is that of Casein kinase 1-like protein 10 from Arabidopsis thaliana (Mouse-ear cress).